We begin with the raw amino-acid sequence, 612 residues long: 1,8-cineole synthase, chloroplastic (612 aa).

A chloroplast-targeting transit peptide spans 1 to 52 (MALVSVAPLASRSCLSKSLISSTHELKPLRRTILPTLRWKSATPSINMCLTT). The Mg(2+) site is built by Asp-363, Asp-367, and Asp-515. A DDXXD motif motif is present at residues 363–367 (DDIYD).

This sequence belongs to the terpene synthase family. Tpsd subfamily. The cofactor is Mg(2+). Requires Mn(2+) as cofactor.

The protein resides in the plastid. The protein localises to the chloroplast. It catalyses the reaction (2E)-geranyl diphosphate + H2O = 1,8-cineole + diphosphate. It participates in terpene metabolism; oleoresin biosynthesis. Terpene synthase (TPS) involved in the biosynthesis of monoterpene natural products included in conifer oleoresin secretions and volatile emissions; these compounds contribute to biotic and abiotic stress defense against herbivores and pathogens. Catalyzes the conversion of (2E)-geranyl diphosphate (GPP) to 1,8-cineole. This chain is 1,8-cineole synthase, chloroplastic, found in Picea sitchensis (Sitka spruce).